Reading from the N-terminus, the 355-residue chain is UPF0324 membrane protein PA5383 (355 aa).

10 helical membrane passes run 20-37 (IPGLLLSAALAGVAILLG), 44-66 (HNGISALTLAIVLGILVGNTLYP), 71-93 (GSAAGVGFSKQILLRAGIILYGL), 100-122 (IAGVGLHGVLLDALMLASTFGLA), 137-159 (TLLIGAGSSICGAAAVMATEPVV), 166-188 (VAVAVSTVVVFGTLGIFLYPALF), 233-255 (AVIAKMVRVMMLAPFLILLSAWL), 275-297 (WFAVGFVLVAGLNSLVSLPPALV), 307-324 (LLAMAMAGLGLGTHLSAI), and 331-353 (PLLLAALLFAWLVLGGGFLTRLA).

This sequence belongs to the UPF0324 family.

The protein resides in the cell membrane. This is UPF0324 membrane protein PA5383 from Pseudomonas aeruginosa (strain ATCC 15692 / DSM 22644 / CIP 104116 / JCM 14847 / LMG 12228 / 1C / PRS 101 / PAO1).